Here is a 728-residue protein sequence, read N- to C-terminus: Catalase-peroxidase 1 (728 aa).

Residues 91–218 (WHSAGTYRTA…LAAVQMGLIY (128 aa)) constitute a cross-link (tryptophyl-tyrosyl-methioninium (Trp-Tyr) (with M-244)). Residue histidine 92 is the Proton acceptor of the active site. A cross-link (tryptophyl-tyrosyl-methioninium (Tyr-Met) (with W-91)) is located at residues 218 to 244 (YVNPEGPDGNPDPVAAARDIRDTFARM). Residue histidine 259 coordinates heme b.

This sequence belongs to the peroxidase family. Peroxidase/catalase subfamily. As to quaternary structure, homodimer or homotetramer. It depends on heme b as a cofactor. Post-translationally, formation of the three residue Trp-Tyr-Met cross-link is important for the catalase, but not the peroxidase activity of the enzyme.

It carries out the reaction H2O2 + AH2 = A + 2 H2O. The catalysed reaction is 2 H2O2 = O2 + 2 H2O. In terms of biological role, bifunctional enzyme with both catalase and broad-spectrum peroxidase activity. In Burkholderia ambifaria (strain MC40-6), this protein is Catalase-peroxidase 1.